A 340-amino-acid polypeptide reads, in one-letter code: Serpentine receptor class alpha-23 (340 aa).

The next 6 membrane-spanning stretches (helical) occupy residues 34–54 (FIST…QALW), 114–136 (YFYY…DRLI), 150–170 (FIAI…FYIA), 199–219 (VRTV…YLSV), 250–270 (ILIV…NLLL), and 284–304 (VGAF…AIYF).

This sequence belongs to the nematode receptor-like protein sra family.

The protein localises to the membrane. The chain is Serpentine receptor class alpha-23 (sra-23) from Caenorhabditis elegans.